We begin with the raw amino-acid sequence, 628 residues long: tRNA uridine 5-carboxymethylaminomethyl modification enzyme MnmG (628 aa).

13-18 (GAGHAG) contacts FAD. Position 273–287 (273–287 (GPRYCPSIEDKIVRF)) interacts with NAD(+).

Belongs to the MnmG family. In terms of assembly, homodimer. Heterotetramer of two MnmE and two MnmG subunits. FAD serves as cofactor.

The protein localises to the cytoplasm. Its function is as follows. NAD-binding protein involved in the addition of a carboxymethylaminomethyl (cmnm) group at the wobble position (U34) of certain tRNAs, forming tRNA-cmnm(5)s(2)U34. The protein is tRNA uridine 5-carboxymethylaminomethyl modification enzyme MnmG of Buchnera aphidicola subsp. Acyrthosiphon pisum (strain APS) (Acyrthosiphon pisum symbiotic bacterium).